We begin with the raw amino-acid sequence, 310 residues long: Formyltetrahydrofolate deformylase (310 aa).

The disordered stretch occupies residues 1–30; the sequence is MGKGSMTAHATPNEPDYPPPPGGPPPPADI. The span at 15–28 shows a compositional bias: pro residues; that stretch reads PDYPPPPGGPPPPA. The ACT domain maps to 32-108; sequence RLLLRCHDRP…VADKFGIDYR (77 aa). The active site involves Asp-255.

This sequence belongs to the PurU family.

The enzyme catalyses (6R)-10-formyltetrahydrofolate + H2O = (6S)-5,6,7,8-tetrahydrofolate + formate + H(+). The protein operates within purine metabolism; IMP biosynthesis via de novo pathway; formate from 10-formyl-5,6,7,8-tetrahydrofolate: step 1/1. Its function is as follows. Catalyzes the hydrolysis of 10-formyltetrahydrofolate (formyl-FH4) to formate and tetrahydrofolate (FH4). The sequence is that of Formyltetrahydrofolate deformylase from Mycobacterium bovis (strain ATCC BAA-935 / AF2122/97).